A 341-amino-acid chain; its full sequence is MNIEEFDYDLPESLIAQTPLKDRDHSRLLVMDRETGEMKHLHFKDIIEYFRPGDTLVLNDTRVMPARLFGLKEETGAKVEMLMLTQIEGNDWEVLLKPAKRIKVGNKLNFGNGKIIAECIKEMDQGGRIMRLHYEGILQERLDELGEMPLPPYIKERLDDPDRYQTVYAKESGSAAAPTAGLHFTDELLIEIKNKGVNIAFVTLHVGLGTFRPVSVDDVNDHEMHSEYYQMTQETADLLNDTKSKGHRIISVGTTSTRTLETIRRDHDKFVETSGWTNIFIYPGFDFKAIDGQITNFHLPKSTLVMLVSAFSSRENVLNAYKTAVNLEYRFFSFGDAMLII.

The protein belongs to the QueA family. As to quaternary structure, monomer.

It is found in the cytoplasm. It carries out the reaction 7-aminomethyl-7-carbaguanosine(34) in tRNA + S-adenosyl-L-methionine = epoxyqueuosine(34) in tRNA + adenine + L-methionine + 2 H(+). Its pathway is tRNA modification; tRNA-queuosine biosynthesis. Its function is as follows. Transfers and isomerizes the ribose moiety from AdoMet to the 7-aminomethyl group of 7-deazaguanine (preQ1-tRNA) to give epoxyqueuosine (oQ-tRNA). The chain is S-adenosylmethionine:tRNA ribosyltransferase-isomerase from Staphylococcus aureus (strain USA300).